Here is a 178-residue protein sequence, read N- to C-terminus: Large ribosomal subunit protein eL20w (178 aa).

This sequence belongs to the eukaryotic ribosomal protein eL20 family.

The polypeptide is Large ribosomal subunit protein eL20w (RPL18AD) (Arabidopsis thaliana (Mouse-ear cress)).